Reading from the N-terminus, the 659-residue chain is Tail sheath protein (659 aa).

This sequence belongs to the myoviridae tail sheath protein family. Hexamer.

The protein resides in the virion. In terms of biological role, structural component of the bacteriophage tail which consists of a contractile sheath, a tube and a baseplate. The central cylindrical segment of the tail consists of a rigid tube, composed of multiple copies of gp19, surrounded by the outer contractile sheath assembled from gp18 subunits. A total of 138 copies of gp18 arranged into 23 hexameric rings constitutes the sheath. During infection, contraction of the sheath drives the central tube through the host outer membrane, creating a channel for DNA ejection from the capsid into the host cell. This Escherichia coli (Bacteriophage T4) protein is Tail sheath protein (18).